Reading from the N-terminus, the 460-residue chain is MLTTRFAPSPTGFLHVGGLRTALYSYLYARKNGGKFVLRIEDTDLKRNSEEAVIAIREAFNWCGLDYDGEVTYQSKRFDIYKEYIKKLLDEGKAYKCYMTKVELDELRAAQEAKKERPKYDGRYRDFTGTPPAGIEPVIRIKAPLNGTIEFKDGIKGDVKFNCADILDDFIIARSDGTPTYNFCVVIDDALMGITHVIRGDDHLSNTPKQIILYEALGFNLPEFFHVAMINGSDGSKLSKRHGATDVMEYKSMGYLPEALLNFLVRLGWSHGDDEIFSMSDMLKYFDPHDINKSASTYNLTKLDWLNAHYIKTLPYEHLADDMKFFGIDFRAFDKGELLLNSLRERSKTLVELKNSALNIINSPETYDEKAVAKFINTESKELLKEYAANLEDKNISAKDCEDITIAFLEKRDKKLKDIAQPIRIAITGSAVSPSIFEVIEVIGIKELKSRIAALLEKLD.

The short motif at 8-18 (PSPTGFLHVGG) is the 'HIGH' region element. Positions 237-241 (KLSKR) match the 'KMSKS' region motif. Lys240 provides a ligand contact to ATP.

The protein belongs to the class-I aminoacyl-tRNA synthetase family. Glutamate--tRNA ligase type 1 subfamily. Monomer.

Its subcellular location is the cytoplasm. The enzyme catalyses tRNA(Glu) + L-glutamate + ATP = L-glutamyl-tRNA(Glu) + AMP + diphosphate. In terms of biological role, catalyzes the attachment of glutamate to tRNA(Glu) in a two-step reaction: glutamate is first activated by ATP to form Glu-AMP and then transferred to the acceptor end of tRNA(Glu). This chain is Glutamate--tRNA ligase 2, found in Campylobacter fetus subsp. fetus (strain 82-40).